We begin with the raw amino-acid sequence, 266 residues long: Undecaprenyl-diphosphatase (266 aa).

8 helical membrane-spanning segments follow: residues 4–24, 39–59, 88–108, 114–134, 147–167, 186–206, 214–234, and 246–266; these read ILRV…PISS, LPIV…IIYY, LNLI…GIFI, LFTF…LFLI, IFFS…PGIS, SLEI…FLKY, IIFN…FGLF, and SKLY…YFLV.

Belongs to the UppP family.

Its subcellular location is the cell inner membrane. The catalysed reaction is di-trans,octa-cis-undecaprenyl diphosphate + H2O = di-trans,octa-cis-undecaprenyl phosphate + phosphate + H(+). Catalyzes the dephosphorylation of undecaprenyl diphosphate (UPP). Confers resistance to bacitracin. The protein is Undecaprenyl-diphosphatase of Borrelia recurrentis (strain A1).